The chain runs to 789 residues: Ent-kaur-16-ene synthase, chloroplastic (789 aa).

5 residues coordinate Mg(2+): Asp536, Asp540, Asn680, Ser684, and Glu688. Positions Asp536–Asp540 match the DDXXD motif motif.

It belongs to the terpene synthase family. It depends on Mg(2+) as a cofactor. The N-terminus is blocked. Abundant in most tissues. Present in low amounts in mature cotyledons.

It is found in the plastid. The protein resides in the chloroplast. The catalysed reaction is ent-copalyl diphosphate = ent-kaur-16-ene + diphosphate. It functions in the pathway plant hormone biosynthesis; gibberellin biosynthesis. Catalyzes the conversion of ent-copalyl diphosphate to the gibberellin precursor ent-kaur-16-ene. The polypeptide is Ent-kaur-16-ene synthase, chloroplastic (Cucurbita maxima (Pumpkin)).